The sequence spans 1505 residues: Myosin-6 (1505 aa).

A Myosin N-terminal SH3-like domain is found at Ser8–Val57. The Myosin motor domain maps to Ser62 to Thr731. ATP-binding positions include Gly156–Thr163 and Asn209–Lys217. Actin-binding regions lie at residues Leu495 to Phe529, Thr531 to Val554, Phe589 to Leu612, and Leu612 to Asn634. IQ domains are found at residues Leu734 to Gln763, Leu757 to Ala786, Arg782 to Ser811, Leu805 to Ala834, Gln830 to Thr859, and Leu853 to Glu882. Residues Thr883–Thr1048 are a coiled coil. Positions Asp1148–Glu1452 constitute a Dilute domain.

It belongs to the TRAFAC class myosin-kinesin ATPase superfamily. Myosin family. Plant myosin class XI subfamily. As to quaternary structure, homodimer. Interacts with RABC2A and RABD1. In terms of tissue distribution, expressed in flowers, leaves, roots and stems.

It is found in the cytoplasm. In terms of biological role, myosin heavy chain that is required for the cell cycle-regulated transport of various organelles and proteins for their segregation. Functions by binding with its tail domain to receptor proteins on organelles and exerting force with its N-terminal motor domain against actin filaments, thereby transporting its cargo along polarized actin cables. Involved in the tip growth of root hair cells. Plays a major role in trafficking of Golgi stacks, mitochondria and peroxisomes during root hair development. Targets the peroxisome through an interaction with RABC2A. Required for development of pavement cells, trichomes, and stigmatic papillae. This Arabidopsis thaliana (Mouse-ear cress) protein is Myosin-6 (XI-2).